A 261-amino-acid chain; its full sequence is Receptor expression-enhancing protein 4 (261 aa).

A run of 2 helical transmembrane segments spans residues 1 to 21 and 35 to 55; these read MVSWIISRAVVLVFGLLYPAY and YVRWMMYWIVFALFMTVETFT. The tract at residues 167 to 261 is disordered; that stretch reads YTDALYPDEP…KKPAQSEPEN (95 aa). The span at 221–230 shows a compositional bias: polar residues; sequence KSLQRSQSLR.

This sequence belongs to the DP1 family. As to quaternary structure, interacts with microtubules. In terms of tissue distribution, during gastrulation, expressed on the dorsal side of the embryo and then in the neural plate and neural tube. At tailbud stages, expressed in the somites, neural tube and otic vesicle.

It is found in the endoplasmic reticulum membrane. Its function is as follows. Microtubule-binding protein required to ensure proper cell division and nuclear envelope reassembly by sequestering the endoplasmic reticulum away from chromosomes during mitosis. Probably acts by clearing the endoplasmic reticulum membrane from metaphase chromosomes. May play a role in the maintenance of both the nervous system and the musculature. The protein is Receptor expression-enhancing protein 4 (reep4) of Xenopus laevis (African clawed frog).